Consider the following 359-residue polypeptide: Mandelate racemase (359 aa).

The active-site Proton acceptor; specific for S-mandelate is Lys-166. Mg(2+) contacts are provided by Asp-195, Glu-221, and Glu-247. The active-site Proton acceptor; specific for R-mandelate is His-297. Position 317 (Glu-317) interacts with substrate.

The protein belongs to the mandelate racemase/muconate lactonizing enzyme family. Homooctamer. Mg(2+) serves as cofactor.

It carries out the reaction (S)-mandelate = (R)-mandelate. It participates in aromatic compound metabolism; (R)-mandelate degradation; benzoate from (R)-mandelate: step 1/4. This Pseudomonas putida (Arthrobacter siderocapsulatus) protein is Mandelate racemase (mdlA).